Consider the following 466-residue polypeptide: Xanthine permease XanQ (466 aa).

The Cytoplasmic segment spans residues Met-1–Leu-44. A helical membrane pass occupies residues Ile-45–Met-65. Topologically, residues Ile-66 to Leu-74 are periplasmic. Residues Gln-75–Ser-95 form a helical membrane-spanning segment. The Cytoplasmic segment spans residues Phe-96–Val-99. A helical membrane pass occupies residues Met-100–Ser-120. The Periplasmic portion of the chain corresponds to Leu-121–Leu-139. The chain crosses the membrane as a helical span at residues Pro-140–Leu-160. Over Ser-161–Phe-170 the chain is Cytoplasmic. A helical transmembrane segment spans residues Gly-171 to Gly-191. Topologically, residues Leu-192–Ile-199 are periplasmic. The helical transmembrane segment at Gly-200 to Val-220 threads the bilayer. Topologically, residues Gly-221–Gly-229 are cytoplasmic. Residues Met-230–Tyr-250 traverse the membrane as a helical segment. At Gly-251–Ile-277 the chain is on the periplasmic side. Residues Thr-278 to Lys-298 traverse the membrane as a helical segment. At Gly-299 to Leu-317 the chain is on the cytoplasmic side. The chain crosses the membrane as a helical span at residues Pro-318–Tyr-338. The Periplasmic portion of the chain corresponds to Val-339–Thr-361. Residues Thr-362 to Ala-382 traverse the membrane as a helical segment. Position 383 (Gly-383) is a topological domain, cytoplasmic. The helical transmembrane segment at Ile-384–Ser-403 threads the bilayer. Topologically, residues Leu-404–Ile-444 are periplasmic. A helical transmembrane segment spans residues Ile-445–Met-465. A topological domain (cytoplasmic) is located at residue Asp-466.

This sequence belongs to the nucleobase:cation symporter-2 (NCS2) (TC 2.A.40) family.

The protein localises to the cell inner membrane. It catalyses the reaction xanthine(in) + H(+)(in) = xanthine(out) + H(+)(out). Its function is as follows. Specific, proton motive force-dependent high-affinity transporter for xanthine. The polypeptide is Xanthine permease XanQ (xanQ) (Escherichia coli O157:H7).